A 512-amino-acid polypeptide reads, in one-letter code: Maturase K (512 aa).

The protein belongs to the intron maturase 2 family. MatK subfamily.

It is found in the plastid. The protein resides in the chloroplast. In terms of biological role, usually encoded in the trnK tRNA gene intron. Probably assists in splicing its own and other chloroplast group II introns. The protein is Maturase K of Lilium canadense (Canada lily).